Here is a 171-residue protein sequence, read N- to C-terminus: HTH-type transcriptional regulator AldR (171 aa).

Residues 1-14 (MSEGSSITGVQTPG) show a composition bias toward polar residues. The interval 1–21 (MSEGSSITGVQTPGSPKDVRA) is disordered. The HTH asnC-type domain maps to 24-85 (LDDIDRRILL…DIDPAAVGLG (62 aa)). Residues 43 to 62 (NSALAEMVGIAPSTCHGRVR) constitute a DNA-binding region (H-T-H motif).

In terms of assembly, homodimer in the absence of L-alanine. Homooctamer in the presence of L-alanine. Homotetramers in the presence of L-cysteine.

Its activity is regulated as follows. In the presence of alanine, AldR changes its quaternary structure from a homodimer to an octamer with an open-ring conformation. The binding affinity of AldR for the ald control region is increased significantly by L-alanine. In vitro, L-cysteine also increases the binding affinity of AldR for the target DNA. Transcriptional regulator that might play a role under hypoxic conditions. Regulates the expression of ald, which encodes L-alanine dehydrogenase. Serves as both an activator for ald expression in the presence of L-alanine and a repressor in the absence of L-alanine. Acts by binding directly to the upstream region of the ald gene. Four AldR-binding sites (O2, O1, O4 and O3) were identified upstream of the ald gene. O2, O1 and O4 are required for the induction of ald expression by alanine, while O3 is directly involved in the repression of ald expression, by occluding the access of RNA polymerase to the ald promoter. In addition to O3, both O1 and O4 are also necessary for full repression of ald expression in the absence of alanine. The protein is HTH-type transcriptional regulator AldR of Mycolicibacterium smegmatis (strain ATCC 700084 / mc(2)155) (Mycobacterium smegmatis).